We begin with the raw amino-acid sequence, 477 residues long: Sporulation-specific protein 77 (477 aa).

Residues S428–L452 form a disordered region. Residues E432 to S444 show a composition bias toward low complexity.

It is found in the cytoplasm. Its function is as follows. Required for spore wall assembly and ascus formation. This Saccharomyces cerevisiae (strain ATCC 204508 / S288c) (Baker's yeast) protein is Sporulation-specific protein 77 (SPO77).